A 420-amino-acid chain; its full sequence is D-tagatose-1,6-bisphosphate aldolase subunit GatZ (420 aa).

It belongs to the GatZ/KbaZ family. GatZ subfamily. Forms a complex with GatY.

The protein operates within carbohydrate metabolism; D-tagatose 6-phosphate degradation; D-glyceraldehyde 3-phosphate and glycerone phosphate from D-tagatose 6-phosphate: step 2/2. Component of the tagatose-1,6-bisphosphate aldolase GatYZ that is required for full activity and stability of the Y subunit. Could have a chaperone-like function for the proper and stable folding of GatY. When expressed alone, GatZ does not show any aldolase activity. Is involved in the catabolism of galactitol. The polypeptide is D-tagatose-1,6-bisphosphate aldolase subunit GatZ (Shigella boydii serotype 18 (strain CDC 3083-94 / BS512)).